A 183-amino-acid chain; its full sequence is Adenine phosphoribosyltransferase (183 aa).

Belongs to the purine/pyrimidine phosphoribosyltransferase family. As to quaternary structure, homodimer.

It localises to the cytoplasm. It catalyses the reaction AMP + diphosphate = 5-phospho-alpha-D-ribose 1-diphosphate + adenine. It functions in the pathway purine metabolism; AMP biosynthesis via salvage pathway; AMP from adenine: step 1/1. Functionally, catalyzes a salvage reaction resulting in the formation of AMP, that is energically less costly than de novo synthesis. The protein is Adenine phosphoribosyltransferase of Blochmanniella floridana.